A 65-amino-acid polypeptide reads, in one-letter code: UPF0434 protein IL1511 (65 aa).

The protein belongs to the UPF0434 family.

The protein is UPF0434 protein IL1511 of Idiomarina loihiensis (strain ATCC BAA-735 / DSM 15497 / L2-TR).